The primary structure comprises 230 residues: MCFGLPNINREGYSFIVVSFIVTCIAFSISWGFGVTCLFPTLLCTYFFRDPARAVPNNKNLILSPADGVISKIEEVNYPLSAENGEEKKFTLVSIFLSVLNVHVNRIPISGTIKEMSYKKGKFVSAMSNRSSNENEKQVIVIEYEKGKEIIVEQIAGLIARRIVCNLGISQNVKAGERFGIIRFGSRVNIYVPADTEVRVSEGQTVIGGETIIANLNKENVQEKLTFDVI.

Ser186 functions as the Schiff-base intermediate with substrate; via pyruvic acid in the catalytic mechanism. Ser186 carries the post-translational modification Pyruvic acid (Ser); by autocatalysis.

This sequence belongs to the phosphatidylserine decarboxylase family. PSD-A subfamily. As to quaternary structure, heterodimer of a large membrane-associated beta subunit and a small pyruvoyl-containing alpha subunit. The cofactor is pyruvate. In terms of processing, is synthesized initially as an inactive proenzyme. Formation of the active enzyme involves a self-maturation process in which the active site pyruvoyl group is generated from an internal serine residue via an autocatalytic post-translational modification. Two non-identical subunits are generated from the proenzyme in this reaction, and the pyruvate is formed at the N-terminus of the alpha chain, which is derived from the carboxyl end of the proenzyme. The post-translation cleavage follows an unusual pathway, termed non-hydrolytic serinolysis, in which the side chain hydroxyl group of the serine supplies its oxygen atom to form the C-terminus of the beta chain, while the remainder of the serine residue undergoes an oxidative deamination to produce ammonia and the pyruvoyl prosthetic group on the alpha chain.

It is found in the cell membrane. The enzyme catalyses a 1,2-diacyl-sn-glycero-3-phospho-L-serine + H(+) = a 1,2-diacyl-sn-glycero-3-phosphoethanolamine + CO2. Its pathway is phospholipid metabolism; phosphatidylethanolamine biosynthesis; phosphatidylethanolamine from CDP-diacylglycerol: step 2/2. Functionally, catalyzes the formation of phosphatidylethanolamine (PtdEtn) from phosphatidylserine (PtdSer). In Wolbachia pipientis wMel, this protein is Phosphatidylserine decarboxylase proenzyme.